Reading from the N-terminus, the 488-residue chain is Ribulose bisphosphate carboxylase large chain (488 aa).

Residues Asn-128 and Thr-178 each contribute to the substrate site. The active-site Proton acceptor is the Lys-180. Lys-182 provides a ligand contact to substrate. Mg(2+) contacts are provided by Lys-206, Asp-208, and Glu-209. An N6-carboxylysine modification is found at Lys-206. The active-site Proton acceptor is the His-298. Arg-299, His-331, and Ser-383 together coordinate substrate.

Belongs to the RuBisCO large chain family. Type I subfamily. Heterohexadecamer of 8 large chains and 8 small chains. Mg(2+) is required as a cofactor.

The catalysed reaction is 2 (2R)-3-phosphoglycerate + 2 H(+) = D-ribulose 1,5-bisphosphate + CO2 + H2O. The enzyme catalyses D-ribulose 1,5-bisphosphate + O2 = 2-phosphoglycolate + (2R)-3-phosphoglycerate + 2 H(+). In terms of biological role, ruBisCO catalyzes two reactions: the carboxylation of D-ribulose 1,5-bisphosphate, the primary event in carbon dioxide fixation, as well as the oxidative fragmentation of the pentose substrate. Both reactions occur simultaneously and in competition at the same active site. In Xanthobacter autotrophicus (strain ATCC BAA-1158 / Py2), this protein is Ribulose bisphosphate carboxylase large chain.